Here is a 956-residue protein sequence, read N- to C-terminus: MARMSFLSFLLFCLTSVAHGNKANKHKPWIETEYQGIVMENDNTVLLNPPLFALDKDAPLHYAGEICGFRVHNGPGGSGSAQFEAVVLDRSTGEGLVRSKEPLDCESQKEHSFTIQAYDCGEGPDGTNSKKSHKATVHVRVNDVNEFSPVFVERRYEASVPEGRLFDRIVRVEAVDADCSPQYSQICFYDIITPNVPFTIDNDGNIKNTEPLDSKRQRVHSFWVTAFDCGKNRAQADAQVIVTVKPSCKPGWIGWTKRIEYTPGSGSIPLFPNLHLETCEETVWNIQATVELQTSHIGKGCDRDSYSDRSVRRLCGAVRGEVDLLPPPSPATNWTAALPTLPSSDSSLVFSFNGSTHVAVVPDSVASAVSGDHFTLQLWMRRGGASTQPPANQARGTRKEEETIVCSTVKNDDSYSHYSLSVHGCRLSLFYWPDVSAARPVKFLWKLEQVCDSEWHHLSLSVQFPSVTLYVDGVTFDPALIHDNGAIPNPAPHQRLVIGACWEPEEKPKDIVNNTMPENKDTGKFVSGYKGLLSGVTVRPGNVEPHSVVECLYACREGLDFGDLETLGSGMKVHVNPSQSVLVLEGDDIESFNRAVQQVTYRNSLRFATPGVRPLKLTTSLRCFSEESCLSLRQLEGYLVVLQPDAPQISLSGVGPHLARPAAEFEGPQGVPLFPELRIVCSLSHAVNTAAQGMEGGALMSDAVAHTLDGCEVQPLGEELNTEREELLVDMESLRERGLDIINTTAYIAITGAESISVYEDVLRSIHYRLAKGSARFERRFRLSCSEMNGRYTSNELTLEVNFLHSLDSLYHPSHLLASQQQFLHPSHHTGELSGHTLPNPHRNSVVPGAATVIIMVCVGFLVVMVILGVFRIRSIHRRGEGARGGGKEGGNQWDDSALTIIVNPMETYENRMGITTDMEGECEDEEEVVDSPDDTSDDQRIIIKKEGRDSAPRRY.

The first 20 residues, 1–20 (MARMSFLSFLLFCLTSVAHG), serve as a signal peptide directing secretion. Residues 21-850 (NKANKHKPWI…PHRNSVVPGA (830 aa)) lie on the Extracellular side of the membrane. 2 consecutive Cadherin domains span residues 30-151 (IETE…SPVF) and 152-271 (VERR…IPLF). Residues asparagine 333, asparagine 353, asparagine 513, and asparagine 743 are each glycosylated (N-linked (GlcNAc...) asparagine). Residues 851-871 (ATVIIMVCVGFLVVMVILGVF) traverse the membrane as a helical segment. Residues 872–956 (RIRSIHRRGE…EGRDSAPRRY (85 aa)) lie on the Cytoplasmic side of the membrane. Residues 921-937 (GECEDEEEVVDSPDDTS) show a composition bias toward acidic residues. The interval 921-956 (GECEDEEEVVDSPDDTSDDQRIIIKKEGRDSAPRRY) is disordered. Residues 938 to 956 (DDQRIIIKKEGRDSAPRRY) are compositionally biased toward basic and acidic residues.

The protein belongs to the calsyntenin family. Homooligomer and heterooligomer; mediates both homophilic and heterophilc interactions with clstn1 and clstn2 paralogs via cadherin domains. Interacts (via cadherin domains) with both alpha and beta isoforms of neurexins. As to expression, by 48 hours post-fertilization (hpf), widely expressed in the brain, with strong expression in the telencephalon and the midbrain. Not expressed in the optic tectum.

It localises to the postsynaptic cell membrane. The protein localises to the endoplasmic reticulum membrane. It is found in the golgi apparatus membrane. Its function is as follows. Synaptic adhesion molecule. Promotes synapse development by acting as a cell adhesion molecule at the postsynaptic membrane, which associates with presynaptic neurexins. This chain is Calsyntenin-3, found in Danio rerio (Zebrafish).